Consider the following 258-residue polypeptide: tRNA pseudouridine synthase A (258 aa).

Asp52 serves as the catalytic Nucleophile. A substrate-binding site is contributed by Tyr110.

Belongs to the tRNA pseudouridine synthase TruA family. In terms of assembly, homodimer.

The catalysed reaction is uridine(38/39/40) in tRNA = pseudouridine(38/39/40) in tRNA. Its function is as follows. Formation of pseudouridine at positions 38, 39 and 40 in the anticodon stem and loop of transfer RNAs. The protein is tRNA pseudouridine synthase A of Francisella tularensis subsp. holarctica (strain LVS).